A 263-amino-acid polypeptide reads, in one-letter code: MRVAFKIAYDGTRFHGFQRQPNLRTVEGEIIKALNNSGIMYSDFKSASRTDRGVSALGNVVAITTEDEKALNPMVLNARLEDVWILSAIEVPQDFHPRFWAKSKVYRYYLPSIGLEVEKVKECSQLFLGVHDFSAFSRVDGRDTVRSIDRIEVFTLGPILIIEIEAKSFLWEMVRRIVKALELCGLGRLSCEEIKEMLEGKFEKSKKVPPAPPEGLLLVDIKYEGIEFPLNDKALKKFKREVEERFRQKIMGAYLLWDMIQLL.

The active-site Nucleophile is the Asp-51. Tyr-106 is a binding site for substrate.

Belongs to the tRNA pseudouridine synthase TruA family.

It carries out the reaction uridine(38/39/40) in tRNA = pseudouridine(38/39/40) in tRNA. In terms of biological role, formation of pseudouridine at positions 38, 39 and 40 in the anticodon stem and loop of transfer RNAs. This is tRNA pseudouridine synthase A from Pyrococcus abyssi (strain GE5 / Orsay).